We begin with the raw amino-acid sequence, 533 residues long: Invertase (533 aa).

A signal peptide spans 1–22 (MVQVLSVLVIPLLTLFFGYVAS). Substrate is bound by residues 47 to 50 (WMND) and Gln68. Residue Asp50 is part of the active site. Residue Asn72 is glycosylated (N-linked (GlcNAc...) asparagine). A substrate-binding site is contributed by 110 to 111 (FS). Asn119, Asn120, and Asn126 each carry an N-linked (GlcNAc...) asparagine glycan. Position 178 to 179 (178 to 179 (RD)) interacts with substrate. Asn219 carries an N-linked (GlcNAc...) asparagine glycan. Trp314 serves as a coordination point for substrate. Residues Asn334, Asn392, and Asn419 are each glycosylated (N-linked (GlcNAc...) asparagine).

Belongs to the glycosyl hydrolase 32 family.

It catalyses the reaction Hydrolysis of terminal non-reducing beta-D-fructofuranoside residues in beta-D-fructofuranosides.. The polypeptide is Invertase (INV) (Schwanniomyces occidentalis (Yeast)).